Consider the following 247-residue polypeptide: tRNA uridine(34) hydroxylase (247 aa).

The Rhodanese domain maps to threonine 124–asparagine 218. Catalysis depends on cysteine 178, which acts as the Cysteine persulfide intermediate.

This sequence belongs to the TrhO family.

It carries out the reaction uridine(34) in tRNA + AH2 + O2 = 5-hydroxyuridine(34) in tRNA + A + H2O. Its function is as follows. Catalyzes oxygen-dependent 5-hydroxyuridine (ho5U) modification at position 34 in tRNAs. The chain is tRNA uridine(34) hydroxylase from Rickettsia prowazekii (strain Madrid E).